Consider the following 729-residue polypeptide: Leucine-rich repeat flightless-interacting protein 1 (729 aa).

At Thr-2 the chain carries N-acetylthreonine. Ser-16 is modified (phosphoserine). A compositionally biased stretch (basic and acidic residues) spans 40-65 (IRMKELERQQKEVEERPDKDFAEKGS). Residues 40 to 98 (IRMKELERQQKEVEERPDKDFAEKGSRNMPSLSAATLASLGGTSSRRGSGDTSISMDTE) form a disordered region. A compositionally biased stretch (low complexity) spans 78–94 (SLGGTSSRRGSGDTSIS). 6 positions are modified to phosphoserine: Ser-83, Ser-84, Ser-88, Asp-90, Ser-92, and Thr-97. Positions 94–194 (SMDTEASIRE…LRQREEMLEK (101 aa)) form a coiled coil. Lys-249 is covalently cross-linked (Glycyl lysine isopeptide (Lys-Gly) (interchain with G-Cter in SUMO1)). A disordered region spans residues 253–729 (VEKVGQRETL…SKSKEDCTMS (477 aa)). Positions 260-272 (ETLQNSEQEQPKP) are enriched in polar residues. A compositionally biased stretch (basic and acidic residues) spans 277 to 297 (DCVDRGVSHPGEKAENQRPAE). Position 302 is a phosphoserine (Ser-302). The segment covering 313–326 (QQVQSQDQENTSDL) has biased composition (polar residues). Basic and acidic residues predominate over residues 327 to 343 (KNSEQIESHKVTNKSDS). Residues 344 to 354 (RASNSPEQSSC) are compositionally biased toward polar residues. A phosphoserine mark is found at Ser-346 and Ser-348. 2 stretches are compositionally biased toward basic and acidic residues: residues 435–445 (KGTENHGESCL) and 482–494 (KADD…EKPI). Residues 465-567 (EEAIVQIPQA…KNKKKKAATP (103 aa)) are DNA-binding. Residues 506 to 523 (INQSGHQDTTGPGSTDAQ) are compositionally biased toward polar residues. Residues Ser-538 and Ser-547 each carry the phosphoserine modification. Over residues 550-564 (KKTKNKKKKNKKKKA) the composition is skewed to basic residues. Over residues 608–618 (QKIRAGSREPV) the composition is skewed to basic and acidic residues. A phosphoserine mark is found at Ser-614 and Ser-670. 2 stretches are compositionally biased toward polar residues: residues 667–684 (CDTS…SQHG) and 693–710 (LDNS…SESG). The segment covering 713–729 (AREEVGNSKSKEDCTMS) has biased composition (basic and acidic residues).

The protein belongs to the LRRFIP family. Homodimer. May also form higher oligomers. Interacts with FLII. Interacts with MYD88. Competes with FLII for MyD88-binding, even in the absence of LPS. As to expression, ubiquitously expressed.

The protein resides in the nucleus. It localises to the cytoplasm. In terms of biological role, transcriptional repressor which preferentially binds to the GC-rich consensus sequence (5'-AGCCCCCGGCG-3') and may regulate expression of TNF, EGFR and PDGFA. May control smooth muscle cells proliferation following artery injury through PDGFA repression. May also bind double-stranded RNA. Positively regulates Toll-like receptor (TLR) signaling in response to agonist probably by competing with the negative FLII regulator for MYD88-binding. The polypeptide is Leucine-rich repeat flightless-interacting protein 1 (Lrrfip1) (Mus musculus (Mouse)).